Here is an 868-residue protein sequence, read N- to C-terminus: Phospholipase D delta (868 aa).

Residues 1–154 (MAEKVSEDVM…ASGERISGWF (154 aa)) enclose the C2 domain. A Ca(2+)-binding site is contributed by Asp-216. A PLD phosphodiesterase 1 domain is found at 368–403 (TLFTHHQKCVLVDTQAVGNNRKVTAFIGGLDLCDGR). Active-site residues include His-373, Lys-375, and Asp-380. Residue His-373 participates in a 1,2-diacyl-sn-glycero-3-phosphate binding. 2 residues coordinate Ca(2+): His-409 and His-440. Residues Gln-588 and His-718 each contribute to the a 1,2-diacyl-sn-glycero-3-phosphate site. In terms of domain architecture, PLD phosphodiesterase 2 spans 713–740 (FMIYVHAKGMIVDDEYVLMGSANINQRS). Active-site residues include His-718, Lys-720, and Asp-725. Glu-781 provides a ligand contact to Ca(2+).

Belongs to the phospholipase D family. C2-PLD subfamily. As to quaternary structure, interacts with GAPC1 and GAPC2. Increased interaction in the presence of H(2)O(2). It depends on Ca(2+) as a cofactor. In terms of tissue distribution, expressed in roots, leaves, stems, siliques and flowers. Strongly expressed in the vascular tissues of cotyledons and leaves under dehydration stress conditions. Expression is higher in old leaves than in young leaves. Expressed in leaves and guard cells. The isoform 2 may not be present in siliques.

The protein resides in the cell membrane. It carries out the reaction a 1,2-diacyl-sn-glycero-3-phosphocholine + H2O = a 1,2-diacyl-sn-glycero-3-phosphate + choline + H(+). With respect to regulation, activated by free oleic acid in a dose-dependent manner and less effectively by other unsaturated fatty acids such as linoleic and linolenic acids. Not activated by the saturated fatty acids stearic and palmitic acids. PIP2 and Ca(2+) stimulate activity by promoting lipid substrate binding to the active site. Activated by H(2)O(2) and by binding to GAPC. Its function is as follows. Hydrolyzes glycerol-phospholipids at the terminal phosphodiesteric bond to generate phosphatidic acids (PA). May be involved in PA accumulation in the dehydration stress response and in the transduction of hormonal and environmental signals to the microtubules cytoskeleton. Prefers phosphatidylethanolamine to phosphatidylcholine as substrate. Involved in H(2)O(2) and abscisic acid (ABA)-induced stomatal closure. Involved in nitric oxide (NO) signaling during stomatal closure. Plays a positive role in ABA-promoted senescence. Involved in basal defense and nonhost resistance. The protein is Phospholipase D delta of Arabidopsis thaliana (Mouse-ear cress).